Reading from the N-terminus, the 57-residue chain is Large ribosomal subunit protein bL32 (57 aa).

The tract at residues 1–23 is disordered; it reads MAVPKKKTSKSKRDKRRATWRHK.

It belongs to the bacterial ribosomal protein bL32 family.

The polypeptide is Large ribosomal subunit protein bL32 (Nostoc sp. (strain PCC 7120 / SAG 25.82 / UTEX 2576)).